A 307-amino-acid polypeptide reads, in one-letter code: Acyl transferase (307 aa).

Catalysis depends on charge relay system residues serine 116, aspartate 213, and histidine 243.

This sequence belongs to the LuxD family.

It participates in lipid metabolism; fatty acid reduction for biolumincescence. Acyl transferase is part of the fatty acid reductase system required for aldehyde biosynthesis; it produces fatty acids for the luminescent reaction. The chain is Acyl transferase from Photorhabdus luminescens (Xenorhabdus luminescens).